The following is a 620-amino-acid chain: 1-deoxy-D-xylulose-5-phosphate synthase (620 aa).

Thiamine diphosphate contacts are provided by residues His-80 and 121–123 (GHS). Asp-152 contributes to the Mg(2+) binding site. Thiamine diphosphate contacts are provided by residues 153–154 (GA), Asn-181, Tyr-288, and Glu-370. Asn-181 contributes to the Mg(2+) binding site.

It belongs to the transketolase family. DXPS subfamily. In terms of assembly, homodimer. Requires Mg(2+) as cofactor. The cofactor is thiamine diphosphate.

The catalysed reaction is D-glyceraldehyde 3-phosphate + pyruvate + H(+) = 1-deoxy-D-xylulose 5-phosphate + CO2. It functions in the pathway metabolic intermediate biosynthesis; 1-deoxy-D-xylulose 5-phosphate biosynthesis; 1-deoxy-D-xylulose 5-phosphate from D-glyceraldehyde 3-phosphate and pyruvate: step 1/1. In terms of biological role, catalyzes the acyloin condensation reaction between C atoms 2 and 3 of pyruvate and glyceraldehyde 3-phosphate to yield 1-deoxy-D-xylulose-5-phosphate (DXP). This Sodalis glossinidius (strain morsitans) protein is 1-deoxy-D-xylulose-5-phosphate synthase.